A 126-amino-acid chain; its full sequence is Large ribosomal subunit protein uL22 (126 aa).

It belongs to the universal ribosomal protein uL22 family. As to quaternary structure, part of the 50S ribosomal subunit.

In terms of biological role, this protein binds specifically to 23S rRNA; its binding is stimulated by other ribosomal proteins, e.g. L4, L17, and L20. It is important during the early stages of 50S assembly. It makes multiple contacts with different domains of the 23S rRNA in the assembled 50S subunit and ribosome. The globular domain of the protein is located near the polypeptide exit tunnel on the outside of the subunit, while an extended beta-hairpin is found that lines the wall of the exit tunnel in the center of the 70S ribosome. This chain is Large ribosomal subunit protein uL22, found in Bradyrhizobium sp. (strain BTAi1 / ATCC BAA-1182).